Here is a 66-residue protein sequence, read N- to C-terminus: Large ribosomal subunit protein bL33c (66 aa).

Belongs to the bacterial ribosomal protein bL33 family.

It localises to the plastid. The protein resides in the chloroplast. The chain is Large ribosomal subunit protein bL33c from Jasminum nudiflorum (Winter jasmine).